Consider the following 439-residue polypeptide: Ornithine aminotransferase, mitochondrial (439 aa).

The transit peptide at 1–25 directs the protein to the mitochondrion; sequence MLSKLARLQTVAGLGLGVHSSVASA. N6-acetyllysine occurs at positions 49 and 66. Lysine 102 carries the post-translational modification N6-succinyllysine. Residue lysine 107 is modified to N6-acetyllysine; alternate. Lysine 107 is subject to N6-succinyllysine; alternate. An N6-(pyridoxal phosphate)lysine modification is found at lysine 292. N6-acetyllysine; alternate is present on lysine 362. The residue at position 362 (lysine 362) is an N6-succinyllysine; alternate. N6-acetyllysine occurs at positions 386 and 392. Lysine 405 is modified (N6-acetyllysine; alternate). At lysine 405 the chain carries N6-succinyllysine; alternate. Lysine 421 is modified (N6-acetyllysine).

It belongs to the class-III pyridoxal-phosphate-dependent aminotransferase family. Homohexamer. Requires pyridoxal 5'-phosphate as cofactor.

It localises to the mitochondrion matrix. It carries out the reaction L-ornithine + 2-oxoglutarate = L-glutamate 5-semialdehyde + L-glutamate. It functions in the pathway amino-acid biosynthesis; L-proline biosynthesis; L-glutamate 5-semialdehyde from L-ornithine: step 1/1. In terms of biological role, catalyzes the reversible interconversion of L-ornithine and 2-oxoglutarate to L-glutamate semialdehyde and L-glutamate. The polypeptide is Ornithine aminotransferase, mitochondrial (OAT) (Bos taurus (Bovine)).